The chain runs to 347 residues: Transcription factor JunD (347 aa).

A disordered region spans residues 1–43 (METPFYGDEALSGLGGGASGSGGSFASPGRLFPGAPPTAAAGS). Residues 13-23 (GLGGGASGSGG) are compositionally biased toward gly residues. The Menin-binding motif (MBM) motif lies at 27 to 39 (SPGRLFPGAPPTA). The MAP kinase docking motif; essential for its phosphorylation motif lies at 46 to 55 (KKDALTLSLS). Residues 62 to 86 (LKPAAAPPPTPLRADGAPSAAPPDG) are disordered. Low complexity predominate over residues 73-86 (LRADGAPSAAPPDG). Phosphoserine is present on Ser90. Position 100 is a phosphoserine; by MAPK8 (Ser100). Thr117 is subject to Phosphothreonine. A disordered region spans residues 244 to 264 (QTVPDVPSFGESPPLSPIDMD). Phosphoserine is present on residues Ser251, Ser255, and Ser259. The tract at residues 268 to 295 (RIKAERKRLRNRIAASKCRKRKLERISR) is basic motif. One can recognise a bZIP domain in the interval 268 to 331 (RIKAERKRLR…AQLKQKVLSH (64 aa)). The leucine-zipper stretch occupies residues 296 to 324 (LEEKVKTLKSQNTELASTASLLREQVAQL).

It belongs to the bZIP family. Jun subfamily. As to quaternary structure, heterodimer; binds DNA as a heterodimer. Component of an AP-1 transcription factor complex composed of JUN-FOS heterodimers. As part of the AP-1 transcription factor complex, forms heterodimers with FOS proteins, thereby binding to the AP-1 consensus sequence and stimulating transcription. Forms heterodimers with FOSB; thereby binding to the AP-1 consensus sequence. Interacts (via MBM motif) with MEN1; this interaction represses transcriptional activation. Interacts with MAPK10; this interaction is inhibited in the presence of MEN1. Phosphorylated by MAP kinases MAPK8 and MAPK10; phosphorylation is inhibited in the presence of MEN1.

The protein resides in the nucleus. Transcription factor binding AP-1 sites. Heterodimerizes with proteins of the FOS family to form an AP-1 transcription factor complex, thereby enhancing their DNA binding activity to an AP-1 consensus sequence 3'-TGA[GC]TCA-5' and enhancing their transcriptional activity. The sequence is that of Transcription factor JunD (JUND) from Homo sapiens (Human).